We begin with the raw amino-acid sequence, 545 residues long: Carboxylesterase 5A (545 aa).

The N-terminal stretch at Met1 to Ala28 is a signal peptide. Asn86 carries N-linked (GlcNAc...) (complex) asparagine glycosylation. Cys94 and Cys121 are oxidised to a cystine. A glycan (N-linked (GlcNAc...) asparagine) is linked at Asn134. The active-site Acyl-ester intermediate is the Ser226. The cysteines at positions 281 and 292 are disulfide-linked. The Charge relay system role is filled by Glu346. N-linked (GlcNAc...) asparagine glycans are attached at residues Asn363 and Asn443. Residue His454 is the Charge relay system of the active site.

The protein belongs to the type-B carboxylesterase/lipase family. In terms of processing, N-glycosylated; contains a fucosylated complex carbohydrate. Present at high level in urine. Expressed in the kidney proximal straight tubular cells and is secreted from the apical compartment of the cells into the urine (at protein level). In mature cats, it is present at higher level in intact males than in castrated males or in intact or spayed females.

Its subcellular location is the secreted. It catalyses the reaction a carboxylic ester + H2O = an alcohol + a carboxylate + H(+). Carboxylesterase present at high level in urine that regulates production of felinine, a probable pheromone precursor. Probably acts by hydrolyzing the peptide bond of the felinine precursor 3-methylbutanol cyteinylglycine, producing felinine and glycine in cat urine. In Felis catus (Cat), this protein is Carboxylesterase 5A (CES5A).